The primary structure comprises 502 residues: MAEPETCDLFVIGGGINGAGVARDAAGRGLKVVLAEKDDLAQGTSSRSGKLVHGGLRYLEYYEFRLVREALIEREVLLNAAPHIIWPMRFVLPHSPQDRPAWLVRLGLFLYDHLGGRKKLPGTRTLDLKRDPEGTPILDQYTKGFEYSDCWVDDARLVALNAVGAAEKGATILTRTPVVSARRENGGWIVETRNSDTGETRTFRARCIVNCAGPWVTDVIHNVAASTSSRNVRLVKGSHIIVPKFWSGANAYLVQNHDKRVIFINPYEGDKALIGTTDIAYEGRAEDVAADEKEIDYLITAVNRYFKEKLRREDVLHSFSGVRPLFDDGKGNPSAVTRDYVFDLDETGGAPLLNVFGGKITTFRELAERGMHRLKHIFPQMGGDWTHDAPLPGGEIANADYETFANTLRDTYPWMPRTLVHHYGRLYGARTKDVVAGAQNLEGLGRHFGGDFHEAEVRYLVAREWAKTAEDILYRRTKHYLHLTEAERAAFVEWFDNANLVA.

8 to 36 (DLFVIGGGINGAGVARDAAGRGLKVVLAE) lines the FAD pocket.

This sequence belongs to the FAD-dependent glycerol-3-phosphate dehydrogenase family. It depends on FAD as a cofactor.

It catalyses the reaction D-erythritol 1-phosphate + NADP(+) = D-erythrulose 1-phosphate + NADPH + H(+). Its pathway is carbohydrate metabolism; erythritol degradation. In terms of biological role, catalyzes the oxydation of D-erythritol 1-phosphate to D-erythrulose 1-phosphate. In Brucella abortus (strain 2308), this protein is D-erythritol 1-phosphate dehydrogenase.